An 84-amino-acid chain; its full sequence is MPQIKSAIKRVKTQEAARVRNIAQMNAMRTAVKKFKTATEQNADNSQDLYKAAARAIDMANSKGLIKKNKAGRDKSRLSALLNK.

This sequence belongs to the bacterial ribosomal protein bS20 family.

In terms of biological role, binds directly to 16S ribosomal RNA. The sequence is that of Small ribosomal subunit protein bS20 from Lacticaseibacillus casei (strain BL23) (Lactobacillus casei).